The primary structure comprises 166 residues: Orotate phosphoribosyltransferase (166 aa).

Residues Arg-83, Lys-84, Arg-86, His-88, and 108–116 (EDVVTTGNS) contribute to the 5-phospho-alpha-D-ribose 1-diphosphate site. Orotate contacts are provided by Thr-112 and Arg-140.

Belongs to the purine/pyrimidine phosphoribosyltransferase family. PyrE subfamily. In terms of assembly, homodimer. It depends on Mg(2+) as a cofactor.

It catalyses the reaction orotidine 5'-phosphate + diphosphate = orotate + 5-phospho-alpha-D-ribose 1-diphosphate. It functions in the pathway pyrimidine metabolism; UMP biosynthesis via de novo pathway; UMP from orotate: step 1/2. Catalyzes the transfer of a ribosyl phosphate group from 5-phosphoribose 1-diphosphate to orotate, leading to the formation of orotidine monophosphate (OMP). This is Orotate phosphoribosyltransferase from Thermoplasma volcanium (strain ATCC 51530 / DSM 4299 / JCM 9571 / NBRC 15438 / GSS1).